Consider the following 170-residue polypeptide: MSTQTEAEMSIAGIIRKHAKDISAPPEVFDKISIQIIICDGGEKIMVVKVPRSILHGVQMNYSNIIKAAKQQFHDYYIMFVRNFEAEGGGKTMTKRKAKEVEEVWLANACFPFLLTGTRTDVRGVDDMVVNVLLERRTSLSRAEMDAIGAALHGLLGKNYIVDVNHHTKN.

The protein belongs to the eukaryotic ribosomal protein eS7 family. As to quaternary structure, component of the small ribosomal subunit.

Its subcellular location is the cytoplasm. The protein is Small ribosomal subunit protein eS7 (RPS7) of Encephalitozoon cuniculi (strain GB-M1) (Microsporidian parasite).